The sequence spans 663 residues: Fructose-1,6-bisphosphatase class 3 1 (663 aa).

It belongs to the FBPase class 3 family. Mn(2+) is required as a cofactor.

It carries out the reaction beta-D-fructose 1,6-bisphosphate + H2O = beta-D-fructose 6-phosphate + phosphate. The protein operates within carbohydrate biosynthesis; gluconeogenesis. This is Fructose-1,6-bisphosphatase class 3 1 from Clostridium beijerinckii (strain ATCC 51743 / NCIMB 8052) (Clostridium acetobutylicum).